Consider the following 176-residue polypeptide: RNA pyrophosphohydrolase (176 aa).

Residues Gly-6 to Phe-149 enclose the Nudix hydrolase domain. The Nudix box motif lies at Gly-38–Gly-59.

The protein belongs to the Nudix hydrolase family. RppH subfamily. The cofactor is a divalent metal cation.

Its function is as follows. Accelerates the degradation of transcripts by removing pyrophosphate from the 5'-end of triphosphorylated RNA, leading to a more labile monophosphorylated state that can stimulate subsequent ribonuclease cleavage. The polypeptide is RNA pyrophosphohydrolase (Aromatoleum aromaticum (strain DSM 19018 / LMG 30748 / EbN1) (Azoarcus sp. (strain EbN1))).